We begin with the raw amino-acid sequence, 218 residues long: MLITGFPAGMLQCNCYVLADRAGTDAVIVDPGQRAMGPLRRILDENRLTPSAVLLTHGHIDHMWSAQKVSDTYGCPTYIHPEDRFMLTDPLFGFGPRVAQVVTGAFFREPKQVVELDRDGDKLDLGSVTVNVDHTPGHTRGSVCFWVAADTDVVLTGDTLFERTIGRTDLFGGSGRDLYRSIVEKLLVLDDKTVVLPGHGNSTTIGAERRFNPFLEGL.

The Zn(2+) site is built by histidine 57, histidine 59, aspartate 61, histidine 62, histidine 138, aspartate 158, and histidine 199.

This sequence belongs to the metallo-beta-lactamase superfamily. Glyoxalase II family. It depends on Zn(2+) as a cofactor.

This is an uncharacterized protein from Mycobacterium leprae (strain TN).